The primary structure comprises 164 residues: uncharacterized protein (164 aa).

Helical transmembrane passes span 25 to 45 (QFGF…PLLG), 63 to 83 (GMAV…VYIV), 120 to 140 (FWTA…ADFF), and 141 to 161 (TVQM…LMMM).

Belongs to the major facilitator superfamily.

Its subcellular location is the cell membrane. This is an uncharacterized protein from Bacillus subtilis (strain 168).